Consider the following 497-residue polypeptide: uncharacterized protein (497 aa).

Positions 1-16 (MSTTTETVTWSQYKPQ) are enriched in polar residues. The segment at 1-29 (MSTTTETVTWSQYKPQETQRRLSRSSTIT) is disordered. At S64 the chain carries Phosphoserine. 6 helical membrane passes run 86–106 (IALVLLNNLMSEMSLTIALPI), 120–140 (FSGLVIGIPTMISLVCLYPML), 155–175 (FRPLIVSCISQIIGHLLYSLA), 180–200 (WLYLILIGRMCSGVGFTMFLY), 222–242 (LNILAQILGSMAGAFLGGILA), and 258–278 (AGSWFMLFIWIVYSIFLSIFF). Phosphoserine is present on S295. The next 6 membrane-spanning stretches (helical) occupy residues 309-329 (FMLCFLSMAAFISIFNVAGYQ), 348-368 (GNFLSLSSLVIAPFVFFSTFL), 377-397 (IMLYGFMMGIVALIVHLVLDA), 407-427 (FVLYSIMQFGFSVGSAPLVSL), 443-463 (VVQVGISIGETVGSICGGAIF), and 468-488 (VGFIAMNLGIALLVFIQLLYL).

Its subcellular location is the membrane. This is an uncharacterized protein from Schizosaccharomyces pombe (strain 972 / ATCC 24843) (Fission yeast).